Reading from the N-terminus, the 262-residue chain is Cyclin-dependent kinase inhibitor 1 (262 aa).

Residues 140–212 (SDVAEAGSEH…SAQQATRPKI (73 aa)) form a disordered region. Positions 160–169 (SGRDRERRET) are enriched in basic and acidic residues. Residues 198–208 (SAATASAQQAT) show a composition bias toward low complexity.

This sequence belongs to the CDI family. ICK/KRP subfamily. Expressed in roots, stems, leaves and apex.

In terms of biological role, regulates the production of endosperm cells, affecting seed filling and embryo development. Regulates endoreduplication of endosperm cells. May play a role in the exit from the mitotic cell cycle during rice grain formation. Inhibitis leaf elongation rates by decreasing cell number, that is partly compensated by increased cell size. May not affect growth rate or cell size of the primary root. In Oryza sativa subsp. japonica (Rice), this protein is Cyclin-dependent kinase inhibitor 1 (KRP1).